A 160-amino-acid polypeptide reads, in one-letter code: Nucleotide-binding protein VFMJ11_1323 (160 aa).

It belongs to the YajQ family.

In terms of biological role, nucleotide-binding protein. This chain is Nucleotide-binding protein VFMJ11_1323, found in Aliivibrio fischeri (strain MJ11) (Vibrio fischeri).